A 1241-amino-acid polypeptide reads, in one-letter code: ATP-dependent helicase/nuclease subunit A (1241 aa).

One can recognise a UvrD-like helicase ATP-binding domain in the interval 12–485; the sequence is SQWTDDQWKA…IDLAKNFRSR (474 aa). Position 33-40 (33-40) interacts with ATP; it reads AAAGSGKT. One can recognise a UvrD-like helicase C-terminal domain in the interval 505-805; the sequence is GEIDYDADAE…RIMTIHKSKG (301 aa).

Belongs to the helicase family. AddA subfamily. In terms of assembly, heterodimer of AddA and AddB/RexB. The cofactor is Mg(2+).

It carries out the reaction Couples ATP hydrolysis with the unwinding of duplex DNA by translocating in the 3'-5' direction.. The enzyme catalyses ATP + H2O = ADP + phosphate + H(+). Functionally, the heterodimer acts as both an ATP-dependent DNA helicase and an ATP-dependent, dual-direction single-stranded exonuclease. Recognizes the chi site generating a DNA molecule suitable for the initiation of homologous recombination. The AddA nuclease domain is required for chi fragment generation; this subunit has the helicase and 3' -&gt; 5' nuclease activities. The protein is ATP-dependent helicase/nuclease subunit A of Bacillus mycoides (strain KBAB4) (Bacillus weihenstephanensis).